The following is a 535-amino-acid chain: Major glycerophosphoinositol permease GIT3 (535 aa).

Residues 49–69 (VVTSVKANSLWPAFASGAGLF) traverse the membrane as a helical segment. A glycan (N-linked (GlcNAc...) asparagine) is linked at Asn75. Transmembrane regions (helical) follow at residues 101–121 (NIAS…GYIS), 137–157 (LIFF…QGFF), 165–185 (FFLG…ASEF), 204–224 (AMID…IWIF), and 232–252 (LWRV…FMRL). An N-linked (GlcNAc...) asparagine glycan is attached at Asn256. The next 6 helical transmembrane spans lie at 275–295 (WWLI…IWFI), 324–344 (WGWS…GAIS), 352–372 (LTLA…SACL), 378–398 (HIAG…FGPG), 419–439 (GIAA…FPAI), and 455–475 (VPFY…IFFC). A glycan (N-linked (GlcNAc...) asparagine) is linked at Asn532.

This sequence belongs to the major facilitator superfamily. Sugar transporter (TC 2.A.1.1) family.

It is found in the cell membrane. The catalysed reaction is sn-glycerol 3-phosphocholine(out) = sn-glycerol 3-phosphocholine(in). Its function is as follows. Glycerophosphodiester transporter that mediates uptake of glycerophosphocholine (GroPCho) with GIT4. GIT3 acts as the major GroPCho permease. Does not possess detectable glycerophosphoinositol (GroPIns) transport activity. The expanded ability to utilize GroPIns and GroPCho results from the organism's pathogenic nature and its need to occupy a variety of environments within its host organism. This possibility is buttressed by the fact that GroPIns and GroPCho are present and abundant in human fluids. The chain is Major glycerophosphoinositol permease GIT3 from Candida albicans (strain SC5314 / ATCC MYA-2876) (Yeast).